A 468-amino-acid polypeptide reads, in one-letter code: ATP synthase subunit beta (468 aa).

An ATP-binding site is contributed by 153–160; sequence GGAGVGKT.

It belongs to the ATPase alpha/beta chains family. As to quaternary structure, F-type ATPases have 2 components, CF(1) - the catalytic core - and CF(0) - the membrane proton channel. CF(1) has five subunits: alpha(3), beta(3), gamma(1), delta(1), epsilon(1). CF(0) has three main subunits: a(1), b(2) and c(9-12). The alpha and beta chains form an alternating ring which encloses part of the gamma chain. CF(1) is attached to CF(0) by a central stalk formed by the gamma and epsilon chains, while a peripheral stalk is formed by the delta and b chains.

Its subcellular location is the cell inner membrane. It catalyses the reaction ATP + H2O + 4 H(+)(in) = ADP + phosphate + 5 H(+)(out). In terms of biological role, produces ATP from ADP in the presence of a proton gradient across the membrane. The catalytic sites are hosted primarily by the beta subunits. This chain is ATP synthase subunit beta, found in Nautilia profundicola (strain ATCC BAA-1463 / DSM 18972 / AmH).